Reading from the N-terminus, the 135-residue chain is Large ribosomal subunit protein uL22 (135 aa).

Residues 112–135 (KKPEKKKLKAKSAKTEEAPKAAEV) are disordered. Positions 124–135 (AKTEEAPKAAEV) are enriched in basic and acidic residues.

This sequence belongs to the universal ribosomal protein uL22 family. Part of the 50S ribosomal subunit.

Its function is as follows. This protein binds specifically to 23S rRNA; its binding is stimulated by other ribosomal proteins, e.g. L4, L17, and L20. It is important during the early stages of 50S assembly. It makes multiple contacts with different domains of the 23S rRNA in the assembled 50S subunit and ribosome. Functionally, the globular domain of the protein is located near the polypeptide exit tunnel on the outside of the subunit, while an extended beta-hairpin is found that lines the wall of the exit tunnel in the center of the 70S ribosome. This chain is Large ribosomal subunit protein uL22, found in Brachyspira hyodysenteriae (strain ATCC 49526 / WA1).